The chain runs to 290 residues: Eukaryotic translation initiation factor 3 subunit G (290 aa).

2 disordered regions span residues 1-35 (MSRL…DGTK) and 157-200 (ESTG…GERM). The 79-residue stretch at 210 to 288 (ATLRVTNVSE…LILRVEFAKR (79 aa)) folds into the RRM domain.

Belongs to the eIF-3 subunit G family. In terms of assembly, component of the eukaryotic translation initiation factor 3 (eIF-3) complex.

It localises to the cytoplasm. RNA-binding component of the eukaryotic translation initiation factor 3 (eIF-3) complex, which is involved in protein synthesis of a specialized repertoire of mRNAs and, together with other initiation factors, stimulates binding of mRNA and methionyl-tRNAi to the 40S ribosome. The eIF-3 complex specifically targets and initiates translation of a subset of mRNAs involved in cell proliferation. This subunit can bind 18S rRNA. The chain is Eukaryotic translation initiation factor 3 subunit G (tif35) from Aspergillus clavatus (strain ATCC 1007 / CBS 513.65 / DSM 816 / NCTC 3887 / NRRL 1 / QM 1276 / 107).